The chain runs to 64 residues: Large ribosomal subunit protein bL35 (64 aa).

Basic residues-rich tracts occupy residues 1–15 (MPKA…KRFR) and 23–33 (VRQKANRRHLL). The disordered stretch occupies residues 1-47 (MPKAKTHSGASKRFRTTGSGKIVRQKANRRHLLEHKPTSRTRRLDGR). Basic and acidic residues predominate over residues 34–46 (EHKPTSRTRRLDG).

This sequence belongs to the bacterial ribosomal protein bL35 family.

This Mycobacteroides abscessus (strain ATCC 19977 / DSM 44196 / CCUG 20993 / CIP 104536 / JCM 13569 / NCTC 13031 / TMC 1543 / L948) (Mycobacterium abscessus) protein is Large ribosomal subunit protein bL35.